The following is a 394-amino-acid chain: Zinc finger and SCAN domain-containing protein 9 (394 aa).

Lys26 is covalently cross-linked (Glycyl lysine isopeptide (Lys-Gly) (interchain with G-Cter in SUMO2)). In terms of domain architecture, SCAN box spans 52–134 (RRHFRQLCYQ…ILLEDLEREL (83 aa)). Residues Lys215 and Lys238 each participate in a glycyl lysine isopeptide (Lys-Gly) (interchain with G-Cter in SUMO2) cross-link. 5 C2H2-type zinc fingers span residues 254–276 (HKCDECGKSFTQSSGLIRHQRIH), 282–304 (YECNECGKAFSRSSGLFNHRGIH), 310–332 (YHCKECGKVFSQSAGLIQHQRIH), 338–360 (YQCSQCSKSYSRRSFLIEHQRSH), and 366–388 (HQCIECGKSFNRHCNLIRHQKIH).

Belongs to the krueppel C2H2-type zinc-finger protein family.

Its subcellular location is the nucleus. Its function is as follows. May be involved in transcriptional regulation. This chain is Zinc finger and SCAN domain-containing protein 9 (ZSCAN9), found in Homo sapiens (Human).